Consider the following 73-residue polypeptide: Small ribosomal subunit protein eS27 (73 aa).

Zn(2+) is bound by residues C28, C31, C47, and C50. A C4-type zinc finger spans residues 28–50 (CVDCGNEQIIFGNASTEVKCHIC).

It belongs to the eukaryotic ribosomal protein eS27 family. Part of the 30S ribosomal subunit. It depends on Zn(2+) as a cofactor.

The polypeptide is Small ribosomal subunit protein eS27 (Methanopyrus kandleri (strain AV19 / DSM 6324 / JCM 9639 / NBRC 100938)).